A 29-amino-acid polypeptide reads, in one-letter code: Amelogenin-like protein (29 aa).

Residue serine 16 is modified to Phosphoserine.

This sequence belongs to the amelogenin family.

Its subcellular location is the secreted. The protein localises to the extracellular space. It localises to the extracellular matrix. In terms of biological role, tooth enamel proteins are produced in ameloblasts and play a role in biomineralization. This chain is Amelogenin-like protein (AMEL), found in Oryctolagus cuniculus (Rabbit).